We begin with the raw amino-acid sequence, 412 residues long: Adherens junction-associated protein 1 (412 aa).

The first 43 residues, 1–43, serve as a signal peptide directing secretion; the sequence is MWIQQLLGLSSMSIRWPGRSLGSHAWILIAMLQLAVDFPSCDS. At 44–284 the chain is on the extracellular side; the sequence is LGPGPEFRLL…GETSGLAVHQ (241 aa). 2 disordered regions span residues 62 to 175 and 243 to 271; these read LWSL…GRPT and DPWKRTPVGVSTTEPSTSPSSNGKDIQPP. Over residues 121 to 146 the composition is skewed to low complexity; the sequence is PPAATRSSPSLASATASSSIVTAGAA. Over residues 160–171 the composition is skewed to basic and acidic residues; sequence HDTEFNDFDFRG. Residues 248 to 263 are compositionally biased toward low complexity; that stretch reads TPVGVSTTEPSTSPSS. The helical transmembrane segment at 285 to 305 threads the bilayer; sequence IITITVSLIMVIAALITTLVL. The tract at residues 305–412 is targeting signals; it reads LKNCCAPSGH…VSEKWFEISC (108 aa). The Cytoplasmic portion of the chain corresponds to 306–412; that stretch reads KNCCAPSGHT…VSEKWFEISC (107 aa).

Forms a complex with CDH1 and CTNNB1; interacts directly with CTNNB1. Interacts with AP1M2 and isoform 2 of BSG/CD147.

The protein localises to the basolateral cell membrane. Its subcellular location is the apical cell membrane. It is found in the cell junction. The protein resides in the adherens junction. Its function is as follows. Plays a role in cell adhesion and cell migration. This chain is Adherens junction-associated protein 1 (Ajap1), found in Mus musculus (Mouse).